The following is a 218-amino-acid chain: 3,4-dihydroxy-2-butanone 4-phosphate synthase (218 aa).

Residues 38-39, Asp43, 151-155, and Glu175 each bind D-ribulose 5-phosphate; these read RE and RRGHT. Position 39 (Glu39) interacts with Mg(2+). His154 contributes to the Mg(2+) binding site.

Belongs to the DHBP synthase family. In terms of assembly, homodimer. Mg(2+) serves as cofactor. It depends on Mn(2+) as a cofactor.

The enzyme catalyses D-ribulose 5-phosphate = (2S)-2-hydroxy-3-oxobutyl phosphate + formate + H(+). It functions in the pathway cofactor biosynthesis; riboflavin biosynthesis; 2-hydroxy-3-oxobutyl phosphate from D-ribulose 5-phosphate: step 1/1. Functionally, catalyzes the conversion of D-ribulose 5-phosphate to formate and 3,4-dihydroxy-2-butanone 4-phosphate. The polypeptide is 3,4-dihydroxy-2-butanone 4-phosphate synthase (Vibrio atlanticus (strain LGP32) (Vibrio splendidus (strain Mel32))).